The primary structure comprises 133 residues: Small ribosomal subunit protein uS11 (133 aa).

Belongs to the universal ribosomal protein uS11 family. Part of the 30S ribosomal subunit. Interacts with proteins S7 and S18. Binds to IF-3.

Functionally, located on the platform of the 30S subunit, it bridges several disparate RNA helices of the 16S rRNA. Forms part of the Shine-Dalgarno cleft in the 70S ribosome. The polypeptide is Small ribosomal subunit protein uS11 (Bordetella petrii (strain ATCC BAA-461 / DSM 12804 / CCUG 43448)).